The chain runs to 837 residues: Zinc fingers and homeoboxes protein 2 (837 aa).

Residues 1 to 41 (MASKRKSTTPCMVRTSQVVEQDVPEEVDRAKEKGIGTPQPD) form a disordered region. Positions 27–77 (VDRAKEKGIGTPQPDVAKDCWAAELENSSKENEVIEVKSMGESQSKKLQGG) are interaction with EFNB1. Threonine 37 carries the post-translational modification Phosphothreonine. Lysine 64 is covalently cross-linked (Glycyl lysine isopeptide (Lys-Gly) (interchain with G-Cter in SUMO2)). C2H2-type zinc fingers lie at residues 78–101 (YECK…DMQH) and 110–133 (YVCA…SKFH). Low complexity predominate over residues 167–180 (TSGPGTGDSDSGIS). Residues 167–203 (TSGPGTGDSDSGISVSKTPIMKPGKPKADAKKVPKKP) form a disordered region. Residues 192-203 (PKADAKKVPKKP) are compositionally biased toward basic and acidic residues. The segment at 195-358 (DAKKVPKKPE…PAQLAPTKVT (164 aa)) is required for homodimerization. DNA-binding regions (homeobox) lie at residues 263-324 (NTTK…WSPE), 439-501 (TPAS…IVHI), 530-591 (PQKF…EQAV), and 628-690 (SPSP…TVKW). Positions 263–446 (NTTKYNSALD…PLTPASDRKK (184 aa)) are required for repressor activity. Positions 263–497 (NTTKYNSALD…SDHRYRCQRG (235 aa)) are required for interaction with NFYA. The segment at 317-446 (HGISWSPEEV…PLTPASDRKK (130 aa)) is required for nuclear localization. The tract at residues 404 to 445 (GQKRPLVTPQAAPEPKRPHIAQVPEPPPKVANPPLTPASDRK) is disordered. The segment covering 427 to 439 (PEPPPKVANPPLT) has biased composition (pro residues). A Glycyl lysine isopeptide (Lys-Gly) (interchain with G-Cter in SUMO2) cross-link involves residue lysine 455. The tract at residues 754-837 (EPAKDCLPAK…DCVPAEAGQA (84 aa)) is disordered. Phosphoserine occurs at positions 825 and 827.

Belongs to the ZHX family. As to quaternary structure, homodimer (via homeobox domain 1). Heterodimer with ZHX1 (via homeobox domain 1). Heterodimer with ZHX3 (via homeobox domain 1). Heterodimerization with ZHX1 is not necessary for repressor activity. Interacts (via homeobox domain) with NFYA (via N-terminus). Interacts with EFNB1 intracellular domain peptide; the interaction enhances ZHX2 transcriptional repression activity.

The protein localises to the nucleus. In terms of biological role, acts as a transcriptional repressor. Represses the promoter activity of the CDC25C gene stimulated by NFYA. May play a role in retinal development where it regulates the composition of bipolar cell populations, by promoting differentiation of bipolar OFF-type cells. In the brain, may promote maintenance and suppress differentiation of neural progenitor cells in the developing cortex. This chain is Zinc fingers and homeoboxes protein 2 (ZHX2), found in Pongo abelii (Sumatran orangutan).